We begin with the raw amino-acid sequence, 638 residues long: Carbon monoxide dehydrogenase (638 aa).

5 residues coordinate [4Fe-4S] cluster: C46, C55, C58, C63, and C74. Positions 265, 299, 343, 452, 483, and 524 each coordinate [Ni-4Fe-5S] cluster.

The protein belongs to the Ni-containing carbon monoxide dehydrogenase family. Homodimer. The cofactor is [4Fe-4S] cluster. Requires [Ni-4Fe-5S] cluster as cofactor.

It carries out the reaction CO + 2 oxidized [2Fe-2S]-[ferredoxin] + H2O = 2 reduced [2Fe-2S]-[ferredoxin] + CO2 + 2 H(+). Functionally, CODH oxidizes carbon monoxide coupled, via CooF, to the reduction of a hydrogen cation by a hydrogenase (possibly CooH). This Methanopyrus kandleri (strain AV19 / DSM 6324 / JCM 9639 / NBRC 100938) protein is Carbon monoxide dehydrogenase (cooS).